We begin with the raw amino-acid sequence, 338 residues long: Putative transport protein TM_1349 (338 aa).

Helical transmembrane passes span 20 to 40, 68 to 88, 147 to 167, 203 to 223, 239 to 259, 263 to 283, and 297 to 317; these read ILISFLVFKIFPDVFAVIVLM, ALLLFFFVMVYSLYMIIPPVF, VSVTTIIVFTLFGLGYTVFYI, VIFINAVIIGLSYWIVFEAFN, FIPIVGVVLEYIPVLLFSLTL, GVLLIALFAILIHAVAFVVFI, and IILSILFFGKLFGLFGSFVGV.

Belongs to the autoinducer-2 exporter (AI-2E) (TC 2.A.86) family.

Its subcellular location is the cell membrane. In Thermotoga maritima (strain ATCC 43589 / DSM 3109 / JCM 10099 / NBRC 100826 / MSB8), this protein is Putative transport protein TM_1349.